A 318-amino-acid polypeptide reads, in one-letter code: Ribose-phosphate pyrophosphokinase 1 (318 aa).

Residues 43–45 (DGE) and 102–103 (RQ) contribute to the ATP site. Residues His-136 and Asp-176 each contribute to the Mg(2+) site. Lys-199 is a catalytic residue. D-ribose 5-phosphate-binding positions include Arg-201, Asp-225, and 229-233 (DTAGT).

This sequence belongs to the ribose-phosphate pyrophosphokinase family. Class I subfamily. In terms of assembly, homohexamer. The cofactor is Mg(2+).

The protein localises to the cytoplasm. It carries out the reaction D-ribose 5-phosphate + ATP = 5-phospho-alpha-D-ribose 1-diphosphate + AMP + H(+). It participates in metabolic intermediate biosynthesis; 5-phospho-alpha-D-ribose 1-diphosphate biosynthesis; 5-phospho-alpha-D-ribose 1-diphosphate from D-ribose 5-phosphate (route I): step 1/1. Its function is as follows. Involved in the biosynthesis of the central metabolite phospho-alpha-D-ribosyl-1-pyrophosphate (PRPP) via the transfer of pyrophosphoryl group from ATP to 1-hydroxyl of ribose-5-phosphate (Rib-5-P). In Listeria innocua serovar 6a (strain ATCC BAA-680 / CLIP 11262), this protein is Ribose-phosphate pyrophosphokinase 1.